The sequence spans 1167 residues: ATP-dependent helicase/deoxyribonuclease subunit B (1167 aa).

The 359-residue stretch at 1 to 359 (MSLRFLLGRS…IRQTEAYRDL (359 aa)) folds into the UvrD-like helicase ATP-binding domain. ATP is bound at residue 8 to 15 (GRSGSGKT). The 307-residue stretch at 282–588 (VNRRHQDKAL…EFALVPPAID (307 aa)) folds into the UvrD-like helicase C-terminal domain. Positions 803, 1125, 1128, and 1134 each coordinate [4Fe-4S] cluster.

This sequence belongs to the helicase family. AddB/RexB type 1 subfamily. As to quaternary structure, heterodimer of AddA and AddB. It depends on Mg(2+) as a cofactor. [4Fe-4S] cluster serves as cofactor.

In terms of biological role, the heterodimer acts as both an ATP-dependent DNA helicase and an ATP-dependent, dual-direction single-stranded exonuclease. Recognizes the chi site generating a DNA molecule suitable for the initiation of homologous recombination. The AddB subunit has 5' -&gt; 3' nuclease activity but not helicase activity. This chain is ATP-dependent helicase/deoxyribonuclease subunit B, found in Geobacillus thermodenitrificans (strain NG80-2).